The chain runs to 227 residues: Cytochrome c oxidase subunit 2 (227 aa).

Residues 1-14 lie on the Mitochondrial intermembrane side of the membrane; sequence MAYPLQMGLQDATS. A helical membrane pass occupies residues 15–45; that stretch reads PIMEELLHFHDHTLMIVFLISSLVLYIISLM. Topologically, residues 46 to 59 are mitochondrial matrix; sequence LTTKLTHTSTMDAQ. A helical membrane pass occupies residues 60–87; it reads EVETVWTILPAIILILIALPSLRILYMM. Residues 88-227 are Mitochondrial intermembrane-facing; that stretch reads DEINNPSLTV…HFEKWSTSML (140 aa). Residues His-161, Cys-196, Glu-198, Cys-200, His-204, and Met-207 each contribute to the Cu cation site. Glu-198 contacts Mg(2+).

Belongs to the cytochrome c oxidase subunit 2 family. In terms of assembly, component of the cytochrome c oxidase (complex IV, CIV), a multisubunit enzyme composed of 14 subunits. The complex is composed of a catalytic core of 3 subunits MT-CO1, MT-CO2 and MT-CO3, encoded in the mitochondrial DNA, and 11 supernumerary subunits COX4I, COX5A, COX5B, COX6A, COX6B, COX6C, COX7A, COX7B, COX7C, COX8 and NDUFA4, which are encoded in the nuclear genome. The complex exists as a monomer or a dimer and forms supercomplexes (SCs) in the inner mitochondrial membrane with NADH-ubiquinone oxidoreductase (complex I, CI) and ubiquinol-cytochrome c oxidoreductase (cytochrome b-c1 complex, complex III, CIII), resulting in different assemblies (supercomplex SCI(1)III(2)IV(1) and megacomplex MCI(2)III(2)IV(2)). Found in a complex with TMEM177, COA6, COX18, COX20, SCO1 and SCO2. Interacts with TMEM177 in a COX20-dependent manner. Interacts with COX20. Interacts with COX16. Cu cation serves as cofactor.

It localises to the mitochondrion inner membrane. The catalysed reaction is 4 Fe(II)-[cytochrome c] + O2 + 8 H(+)(in) = 4 Fe(III)-[cytochrome c] + 2 H2O + 4 H(+)(out). Its function is as follows. Component of the cytochrome c oxidase, the last enzyme in the mitochondrial electron transport chain which drives oxidative phosphorylation. The respiratory chain contains 3 multisubunit complexes succinate dehydrogenase (complex II, CII), ubiquinol-cytochrome c oxidoreductase (cytochrome b-c1 complex, complex III, CIII) and cytochrome c oxidase (complex IV, CIV), that cooperate to transfer electrons derived from NADH and succinate to molecular oxygen, creating an electrochemical gradient over the inner membrane that drives transmembrane transport and the ATP synthase. Cytochrome c oxidase is the component of the respiratory chain that catalyzes the reduction of oxygen to water. Electrons originating from reduced cytochrome c in the intermembrane space (IMS) are transferred via the dinuclear copper A center (CU(A)) of subunit 2 and heme A of subunit 1 to the active site in subunit 1, a binuclear center (BNC) formed by heme A3 and copper B (CU(B)). The BNC reduces molecular oxygen to 2 water molecules using 4 electrons from cytochrome c in the IMS and 4 protons from the mitochondrial matrix. This is Cytochrome c oxidase subunit 2 (MT-CO2) from Halichoerus grypus (Gray seal).